The primary structure comprises 164 residues: Oocyte-expressed protein homolog (164 aa).

The 62-residue stretch at 44-105 (PLVLYMEAWV…SAQTRMKNIL (62 aa)) folds into the KH; atypical domain.

Belongs to the KHDC1 family. Component of the subcortical maternal complex (SCMC), at least composed of NLRP5, KHDC3, OOEP, and TLE6. Within the complex, interacts with NLRP5, KHDC3 and TLE6. The SCMC may facilitate translocation of its components between the nuclear and cytoplasmic compartments. As part of the SCMC interacts with the SCMC-associated protein NLRP4F. Forms a scaffold complex with KHDC3/FILIA, and interacts with BLM and TRIM25 at DNA replication forks. Expressed in ovaries, where it is restricted to growing oocytes, with greatest levels in fully grown oocytes.

The protein resides in the cytoplasm. It localises to the nucleus. Functionally, component of the subcortical maternal complex (SCMC), a multiprotein complex that plays a key role in early embryonic development. The SCMC complex is a structural constituent of cytoplasmic lattices, which consist in fibrous structures found in the cytoplasm of oocytes and preimplantation embryos. They are required to store maternal proteins critical for embryonic development, such as proteins that control epigenetic reprogramming of the preimplantation embryo, and prevent their degradation or activation. As part of the OOEP-KHDC3 scaffold, recruits BLM and TRIM25 to DNA replication forks, thereby promoting the ubiquitination of BLM by TRIM25, enhancing BLM retainment at replication forks and therefore promoting stalled replication fork restart. Positively regulates the homologous recombination-mediated DNA double-strand break (DSB) repair pathway by regulating ATM activation and RAD51 recruitment to DSBs in oocytes. Thereby contributes to oocyte survival and the resumption and completion of meiosis. The sequence is that of Oocyte-expressed protein homolog from Mus musculus (Mouse).